Here is a 527-residue protein sequence, read N- to C-terminus: Secologanin synthase 2 (527 aa).

Topologically, residues 1–11 are lumenal; it reads MEMDMDIIRKA. Residues 12–32 traverse the membrane as a helical segment; sequence IAATIFALVMAWAWRVLDWAW. Over 33 to 527 the chain is Cytoplasmic; sequence FTPKRIEKRL…IYKKLERQNF (495 aa). Cys470 is a heme binding site.

This sequence belongs to the cytochrome P450 family. It depends on heme as a cofactor. As to expression, expressed in leaves (especially in leaf epidermis), and, to a lower extent, in roots, stems, flower buds and flowers.

It localises to the endoplasmic reticulum membrane. The enzyme catalyses loganin + reduced [NADPH--hemoprotein reductase] + O2 = secologanin + oxidized [NADPH--hemoprotein reductase] + 2 H2O + H(+). It catalyses the reaction secologanin + reduced [NADPH--hemoprotein reductase] + O2 = secoxyloganin + oxidized [NADPH--hemoprotein reductase] + H2O + 2 H(+). It participates in alkaloid biosynthesis. Component of the seco-iridoid and derivatives monoterpenoid indole alkaloids (MIAs, e.g. secologanin) biosynthesis pathway. Catalyzes the conversion of loganin into secologanin. Catalyzes the conversion of secologanin into secoxyloganin. The polypeptide is Secologanin synthase 2 (Catharanthus roseus (Madagascar periwinkle)).